The sequence spans 429 residues: Glutamate-1-semialdehyde 2,1-aminomutase 1 (429 aa).

Position 268 is an N6-(pyridoxal phosphate)lysine (K268).

Belongs to the class-III pyridoxal-phosphate-dependent aminotransferase family. HemL subfamily. As to quaternary structure, homodimer. Pyridoxal 5'-phosphate is required as a cofactor.

Its subcellular location is the cytoplasm. It catalyses the reaction (S)-4-amino-5-oxopentanoate = 5-aminolevulinate. Its pathway is porphyrin-containing compound metabolism; protoporphyrin-IX biosynthesis; 5-aminolevulinate from L-glutamyl-tRNA(Glu): step 2/2. This is Glutamate-1-semialdehyde 2,1-aminomutase 1 from Listeria monocytogenes serotype 4b (strain F2365).